The primary structure comprises 310 residues: Malate dehydrogenase (310 aa).

Residues 7–12 and Asp-32 each bind NAD(+); that span reads GAGNVG. Residues Arg-81 and Arg-87 each coordinate substrate. NAD(+) contacts are provided by residues Asn-94 and 117–119; that span reads VSN. Substrate contacts are provided by Asn-119 and Arg-150. His-174 acts as the Proton acceptor in catalysis.

It belongs to the LDH/MDH superfamily. MDH type 3 family. Homotetramer; arranged as a dimer of dimers.

The enzyme catalyses (S)-malate + NAD(+) = oxaloacetate + NADH + H(+). Its function is as follows. Catalyzes the reversible oxidation of malate to oxaloacetate. The polypeptide is Malate dehydrogenase (Chlorobaculum parvum (strain DSM 263 / NCIMB 8327) (Chlorobium vibrioforme subsp. thiosulfatophilum)).